Reading from the N-terminus, the 142-residue chain is MKTLSAKPAEVTHDWYVVDADGKTLGRLATQIATRLRGKHKPSFTPHVDTGDFIVVINADKITVTGKKAQDKKYYRHSGYPGGIKETNFSKLLAHKPEDVLHKAVKGMLPKGPLGYAMIKKLKLYAGTEHPHEAQQPKALDI.

It belongs to the universal ribosomal protein uL13 family. In terms of assembly, part of the 50S ribosomal subunit.

This protein is one of the early assembly proteins of the 50S ribosomal subunit, although it is not seen to bind rRNA by itself. It is important during the early stages of 50S assembly. This is Large ribosomal subunit protein uL13 from Psychrobacter cryohalolentis (strain ATCC BAA-1226 / DSM 17306 / VKM B-2378 / K5).